The sequence spans 213 residues: Adenylate kinase (213 aa).

10–15 (GSGKGT) is an ATP binding site. Residues 30–59 (SVGDLLRNIISSSSELGKKIKGTVESGNLI) form an NMP region. AMP-binding positions include Arg36, 57-59 (NLI), 83-86 (GFPR), and Gln90. The interval 125–160 (NRLACLDCKNIYSVSSFKSTTCAKCKSTRLEKRIDD) is LID. Arg126 is an ATP binding site. Positions 129 and 132 each coordinate Zn(2+). 135–136 (IY) contributes to the ATP binding site. Zn(2+) is bound by residues Cys146 and Cys149. AMP is bound by residues Arg157 and Arg169. An ATP-binding site is contributed by Leu195.

It belongs to the adenylate kinase family. In terms of assembly, monomer.

The protein localises to the cytoplasm. It catalyses the reaction AMP + ATP = 2 ADP. Its pathway is purine metabolism; AMP biosynthesis via salvage pathway; AMP from ADP: step 1/1. Functionally, catalyzes the reversible transfer of the terminal phosphate group between ATP and AMP. Plays an important role in cellular energy homeostasis and in adenine nucleotide metabolism. The sequence is that of Adenylate kinase from Wolbachia pipientis wMel.